The primary structure comprises 122 residues: Basic phospholipase A2 PLA-B (122 aa).

7 cysteine pairs are disulfide-bonded: cysteine 26/cysteine 115, cysteine 28/cysteine 44, cysteine 43/cysteine 95, cysteine 49/cysteine 122, cysteine 50/cysteine 88, cysteine 57/cysteine 81, and cysteine 75/cysteine 86. The Ca(2+) site is built by tyrosine 27, glycine 29, and glycine 31. Histidine 47 is an active-site residue. Aspartate 48 is a Ca(2+) binding site. Aspartate 89 is a catalytic residue.

Belongs to the phospholipase A2 family. Group II subfamily. D49 sub-subfamily. Ca(2+) serves as cofactor. In terms of tissue distribution, expressed by the venom gland.

The protein localises to the secreted. The enzyme catalyses a 1,2-diacyl-sn-glycero-3-phosphocholine + H2O = a 1-acyl-sn-glycero-3-phosphocholine + a fatty acid + H(+). Snake venom phospholipase A2 (PLA2) that displays edema-inducing activities. PLA-B is three times more active than PLA-A in edema-inducing activities. PLA2 catalyzes the calcium-dependent hydrolysis of the 2-acyl groups in 3-sn-phosphoglycerides. The protein is Basic phospholipase A2 PLA-B of Protobothrops flavoviridis (Habu).